The primary structure comprises 431 residues: Chaperone SurA (431 aa).

The signal sequence occupies residues 1 to 20 (MKLTVVTFALLAFISFNTFA). PpiC domains lie at 171–272 (QAEY…KIID) and 281–381 (VAEL…QLMD).

Its subcellular location is the periplasm. It carries out the reaction [protein]-peptidylproline (omega=180) = [protein]-peptidylproline (omega=0). In terms of biological role, chaperone involved in the correct folding and assembly of outer membrane proteins. Recognizes specific patterns of aromatic residues and the orientation of their side chains, which are found more frequently in integral outer membrane proteins. May act in both early periplasmic and late outer membrane-associated steps of protein maturation. In Pseudoalteromonas atlantica (strain T6c / ATCC BAA-1087), this protein is Chaperone SurA.